Reading from the N-terminus, the 791-residue chain is Ubiquitin carboxyl-terminal hydrolase 10-A (791 aa).

Polar residues-rich tracts occupy residues 118–139 (FSES…SGTG) and 270–284 (DTTE…QTLE). Disordered stretches follow at residues 118-156 (FSES…YYSY) and 270-291 (DTTE…EDTA). Residues 408-788 (RGLINKGNWC…TAYLLYYRRV (381 aa)) enclose the USP domain. The Nucleophile role is filled by Cys417. A disordered region spans residues 560–580 (EVNKEEQEGSDEEWEQVGPRN). His742 (proton acceptor) is an active-site residue.

It belongs to the peptidase C19 family. USP10 subfamily.

The protein resides in the cytoplasm. The protein localises to the nucleus. It carries out the reaction Thiol-dependent hydrolysis of ester, thioester, amide, peptide and isopeptide bonds formed by the C-terminal Gly of ubiquitin (a 76-residue protein attached to proteins as an intracellular targeting signal).. Functionally, hydrolase that can remove conjugated ubiquitin from target proteins such as p53/tp53, rps2/us5, rps3/us3, rps10/eS10, becn1, snx3 and cftr. Acts as an essential regulator of p53/tp53 stability: in unstressed cells, specifically deubiquitinates p53/tp53 in the cytoplasm, leading to counteracts MDM2 action and stabilize p53/tp53. Following DNA damage, translocates to the nucleus and deubiquitinates p53/tp53, leading to regulate the p53/TP53-dependent DNA damage response. Component of a regulatory loop that controls autophagy and p53/tp53 levels. Plays a key role in 40S ribosome subunit recycling when a ribosome has stalled during translation: acts both by inhibiting formation of stress granules, which store stalled translation pre-initiation complexes, and mediating deubiquitination of 40S ribosome subunits. Deubiquitinates cftr in early endosomes, enhancing its endocytic recycling. The protein is Ubiquitin carboxyl-terminal hydrolase 10-A (usp10-a) of Xenopus laevis (African clawed frog).